Here is a 527-residue protein sequence, read N- to C-terminus: Transcription initiation factor TFIID subunit 6b (527 aa).

The region spanning 3 to 99 (TKESIEVIAQ…NLEPTSGSKS (97 aa)) is the Histone-fold domain. 2 disordered regions span residues 410 to 442 (SPPT…THQP) and 462 to 492 (MRGT…PKTS). 2 stretches are compositionally biased toward polar residues: residues 416–427 (VWKTNGKLTSPR) and 462–473 (MRGTTTVPQQSH).

The protein belongs to the TAF6 family. As to quaternary structure, component of the TFIID complex. TFIID is composed of TATA binding protein (TBP) and a number of TBP-associated factors (TAFs) whose MWs range from 14-217 kDa. Interacts with TAF5 and TAF9. In terms of tissue distribution, expressed in roots, leaves, inflorescences and siliques.

The protein localises to the nucleus. Functionally, TAFs are components of the transcription factor IID (TFIID) complex that is essential for mediating regulation of RNA polymerase transcription. Not redundant with TAF6. The protein is Transcription initiation factor TFIID subunit 6b (TAF6B) of Arabidopsis thaliana (Mouse-ear cress).